A 91-amino-acid chain; its full sequence is Small ribosomal subunit protein uS19 (91 aa).

Positions 1-32 (MPRSIKKGPFIDEHLDRKVQSAQASNSRRPIK) are disordered. Over residues 9–19 (PFIDEHLDRKV) the composition is skewed to basic and acidic residues.

It belongs to the universal ribosomal protein uS19 family.

Its function is as follows. Protein S19 forms a complex with S13 that binds strongly to the 16S ribosomal RNA. This is Small ribosomal subunit protein uS19 from Acidithiobacillus ferrooxidans (strain ATCC 53993 / BNL-5-31) (Leptospirillum ferrooxidans (ATCC 53993)).